The primary structure comprises 354 residues: Cysteine and histidine-rich domain-containing protein morgana (354 aa).

The Zn(2+) site is built by C4, C9, C23, H26, C41, C42, C58, H63, C140, C145, C159, H162, C177, C178, C194, and H199. CHORD domains follow at residues 4 to 63 and 140 to 199; these read CYNR…LAKH and CKNN…YGEH. The 92-residue stretch at 210-301 folds into the CS domain; the sequence is VVQCRYDWHQ…LEPGSWSNLN (92 aa). A phosphoserine mark is found at S324 and S339.

In terms of assembly, interacts with Hsp83.

The protein localises to the cytoplasm. It localises to the nucleus. The protein resides in the cytoskeleton. Its subcellular location is the spindle. Its function is as follows. Regulates centrosome duplication and mitotic spindle dynamics. Also involved in controlling the size of dendritic arbors. May act as co-chaperone for Hsp83. During mitotic spindle assembly, regulates microtubule (MT) dynamics by binding to MTs and promoting MT polymerisation. Promotes the elongation and retraction of terminal branches in response to changes in body size, possibly acting downstream of the TORC2 pathway to enable proportional scaling of dendritic arbors. This chain is Cysteine and histidine-rich domain-containing protein morgana, found in Drosophila melanogaster (Fruit fly).